We begin with the raw amino-acid sequence, 214 residues long: uncharacterized protein (214 aa).

One can recognise an AMMECR1 domain in the interval 1–194; the sequence is MVSANREMAV…MHYSEYLSYV (194 aa).

This is an uncharacterized protein from Arabidopsis thaliana (Mouse-ear cress).